Here is a 420-residue protein sequence, read N- to C-terminus: Membrane protein UL43 homolog (420 aa).

A run of 11 helical transmembrane segments spans residues 58-78, 81-101, 114-134, 157-177, 181-201, 203-223, 278-298, 312-332, 343-363, 364-384, and 399-419; these read IFSIAAHLAITLSCITLIQFI, KIIYINCTIYAITGFLIAFIV, IGKPAQFIFALISSIADTLIT, LMCFVMLGAFIASYHYVCLAT, LTWKAGFLILTAGTIIGISAP, GNISSLFGFLFLYTILAINVV, QIPMVVMSHATGVLIPVVIAL, TDMLQGVCGVLVGASVSIFIP, IIILLSIIGAMAITLAGFGLV, LGPTLFSACAAALSCYTCINI, and VVKSILGFIITSLLVCILVAL.

This sequence belongs to the alphaherpesvirinae HHV-1 UL43 family.

It localises to the host membrane. The sequence is that of Membrane protein UL43 homolog (MDV056) from Gallus gallus (Chicken).